We begin with the raw amino-acid sequence, 318 residues long: Ankyrin repeat domain-containing protein 1 (318 aa).

Residues 37–77 (ALEKQEDLKTTSKSLIELEEEKQSKEKQLKSELLKKKLEER) adopt a coiled-coil conformation. ANK repeat units follow at residues 151–180 (YKRT…NIEF), 184–213 (LEST…AINA), 217–246 (LLST…DLNA), 250–279 (EGDT…NLNI), and 283–314 (AGKT…KNSH).

The protein resides in the nucleus. May act as a nuclear transcription factor that negatively regulates the expression of cardiac genes. The polypeptide is Ankyrin repeat domain-containing protein 1 (ankrd1) (Xenopus laevis (African clawed frog)).